A 187-amino-acid chain; its full sequence is UPF0301 protein SO_3346 (187 aa).

This sequence belongs to the UPF0301 (AlgH) family.

In Shewanella oneidensis (strain ATCC 700550 / JCM 31522 / CIP 106686 / LMG 19005 / NCIMB 14063 / MR-1), this protein is UPF0301 protein SO_3346.